The chain runs to 195 residues: Peptidyl-tRNA hydrolase (195 aa).

Y17 contributes to the tRNA binding site. H22 functions as the Proton acceptor in the catalytic mechanism. Residues Y68, N70, and N116 each coordinate tRNA.

Belongs to the PTH family. In terms of assembly, monomer.

The protein localises to the cytoplasm. It catalyses the reaction an N-acyl-L-alpha-aminoacyl-tRNA + H2O = an N-acyl-L-amino acid + a tRNA + H(+). Hydrolyzes ribosome-free peptidyl-tRNAs (with 1 or more amino acids incorporated), which drop off the ribosome during protein synthesis, or as a result of ribosome stalling. Its function is as follows. Catalyzes the release of premature peptidyl moieties from peptidyl-tRNA molecules trapped in stalled 50S ribosomal subunits, and thus maintains levels of free tRNAs and 50S ribosomes. In Shewanella sp. (strain ANA-3), this protein is Peptidyl-tRNA hydrolase.